A 204-amino-acid chain; its full sequence is Sex-determining region Y protein (204 aa).

The sufficient for interaction with KPNB1 stretch occupies residues 59 to 136 (RVKRPMNAFI…YKYRPRRKAK (78 aa)). Positions 60-128 (VKRPMNAFIV…MHREKYPNYK (69 aa)) form a DNA-binding region, HMG box. Required for nuclear localization regions lie at residues 61-77 (KRPMNAFIVWSRDQRRK) and 130-136 (RPRRKAK). Positions 107-139 (WPFFQEAQKLQAMHREKYPNYKYRPRRKAKMLP) are sufficient for interaction with EP300. Lys136 carries the post-translational modification N6-acetyllysine. A necessary for interaction with ZNF208 isoform KRAB-O region spans residues 138–155 (LPKNCSLLPADPASVLCS). The segment at 175 to 204 (RMEHQLGHLPPINAASSPQQRDRYSHWTKL) is disordered. The span at 194–204 (QRDRYSHWTKL) shows a compositional bias: basic and acidic residues. The tract at residues 198–204 (YSHWTKL) is necessary for interaction with SLC9A3R2.

It belongs to the SRY family. Interacts with CALM, EP300, HDAC3, KPNB1, ZNF208 isoform KRAB-O, PARP1, SLC9A3R2 and WT1. The interaction with EP300 modulates its DNA-binding activity. The interaction with KPNB1 is sensitive to dissociation by Ran in the GTP-bound form. Interaction with PARP1 impaired its DNA-binding activity. In terms of processing, phosphorylated on serine residues by PKA. Phosphorylation by PKA enhances its DNA-binding activity and stimulates transcription repression. Acetylation of Lys-136 contributes to its nuclear localization and enhances its interaction with KPNB1. Deacetylated by HDAC3. Post-translationally, poly-ADP-ribosylated by PARP1. ADP-ribosylation reduces its DNA-binding activity.

It is found in the nucleus speckle. Its subcellular location is the cytoplasm. It localises to the nucleus. Transcriptional regulator that controls a genetic switch in male development. It is necessary and sufficient for initiating male sex determination by directing the development of supporting cell precursors (pre-Sertoli cells) as Sertoli rather than granulosa cells. Involved in different aspects of gene regulation including promoter activation or repression. Binds to the DNA consensus sequence 5'-[AT]AACAA[AT]-3'. SRY HMG box recognizes DNA by partial intercalation in the minor groove and promotes DNA bending. Also involved in pre-mRNA splicing. In male adult brain involved in the maintenance of motor functions of dopaminergic neurons. The chain is Sex-determining region Y protein from Homo sapiens (Human).